Consider the following 355-residue polypeptide: S-adenosylmethionine:tRNA ribosyltransferase-isomerase (355 aa).

Belongs to the QueA family. In terms of assembly, monomer.

The protein localises to the cytoplasm. It carries out the reaction 7-aminomethyl-7-carbaguanosine(34) in tRNA + S-adenosyl-L-methionine = epoxyqueuosine(34) in tRNA + adenine + L-methionine + 2 H(+). It functions in the pathway tRNA modification; tRNA-queuosine biosynthesis. Functionally, transfers and isomerizes the ribose moiety from AdoMet to the 7-aminomethyl group of 7-deazaguanine (preQ1-tRNA) to give epoxyqueuosine (oQ-tRNA). This Jannaschia sp. (strain CCS1) protein is S-adenosylmethionine:tRNA ribosyltransferase-isomerase.